The following is a 327-amino-acid chain: GMP reductase (327 aa).

C175 serves as the catalytic Thioimidate intermediate. 204-227 lines the NADP(+) pocket; sequence IIADGGIRTHGDIAKSIRFGASMV.

The protein belongs to the IMPDH/GMPR family. GuaC type 2 subfamily.

The enzyme catalyses IMP + NH4(+) + NADP(+) = GMP + NADPH + 2 H(+). Catalyzes the irreversible NADPH-dependent deamination of GMP to IMP. It functions in the conversion of nucleobase, nucleoside and nucleotide derivatives of G to A nucleotides, and in maintaining the intracellular balance of A and G nucleotides. In Exiguobacterium sp. (strain ATCC BAA-1283 / AT1b), this protein is GMP reductase.